The chain runs to 1377 residues: DNA-directed RNA polymerase subunit beta' (1377 aa).

Positions 60, 62, 75, and 78 each coordinate Zn(2+). Mg(2+)-binding residues include Asp-449, Asp-451, and Asp-453. Residues Cys-777, Cys-851, Cys-858, and Cys-861 each coordinate Zn(2+).

The protein belongs to the RNA polymerase beta' chain family. As to quaternary structure, the RNAP catalytic core consists of 2 alpha, 1 beta, 1 beta' and 1 omega subunit. When a sigma factor is associated with the core the holoenzyme is formed, which can initiate transcription. Requires Mg(2+) as cofactor. Zn(2+) is required as a cofactor.

It carries out the reaction RNA(n) + a ribonucleoside 5'-triphosphate = RNA(n+1) + diphosphate. DNA-dependent RNA polymerase catalyzes the transcription of DNA into RNA using the four ribonucleoside triphosphates as substrates. The chain is DNA-directed RNA polymerase subunit beta' from Borreliella burgdorferi (strain ATCC 35210 / DSM 4680 / CIP 102532 / B31) (Borrelia burgdorferi).